A 563-amino-acid chain; its full sequence is Kelch repeat and BTB domain-containing protein 1 (563 aa).

The region spanning 21–88 (CDINIVINDE…IYGIPLSLTN (68 aa)) is the BTB domain. The 97-residue stretch at 123–219 (CIDFYIYADK…SLLSPQVIKS (97 aa)) folds into the BACK domain. 6 Kelch repeats span residues 252–297 (IELI…VMDN), 298–346 (IIYM…VDDE), 347–395 (YIYC…MLNG), 397–441 (IYVI…VHAG), 442–492 (KIYI…SVHN), and 494–540 (LYVG…PIKH).

As to quaternary structure, interacts (via BTB domain) with host CUL3.

The protein localises to the host cytoplasm. In terms of biological role, probable substrate-specific adapter of CUL3-containing E3 ubiquitin-protein ligases which mediate the ubiquitination and subsequent proteasomal degradation of host target proteins. In Mus musculus (Mouse), this protein is Kelch repeat and BTB domain-containing protein 1 (KBTB1).